A 309-amino-acid chain; its full sequence is Olfactory receptor 5H2 (309 aa).

Residues methionine 1 to phenylalanine 28 lie on the Extracellular side of the membrane. N-linked (GlcNAc...) asparagine glycosylation is present at asparagine 5. A helical membrane pass occupies residues leucine 29–isoleucine 49. The Cytoplasmic segment spans residues tryptophan 50–histidine 56. A helical transmembrane segment spans residues isoleucine 57–valine 77. Topologically, residues threonine 78–cysteine 97 are extracellular. Cysteine 97 and cysteine 179 form a disulfide bridge. The helical transmembrane segment at methionine 98–methionine 118 threads the bilayer. Over alanine 119–arginine 143 the chain is Cytoplasmic. The helical transmembrane segment at leucine 144 to phenylalanine 164 threads the bilayer. Over arginine 165 to serine 193 the chain is Extracellular. The helical transmembrane segment at isoleucine 194–valine 214 threads the bilayer. The Cytoplasmic portion of the chain corresponds to leucine 215 to serine 239. A helical membrane pass occupies residues threonine 240 to leucine 260. Residues arginine 261–aspartate 271 are Extracellular-facing. A helical membrane pass occupies residues methionine 272–leucine 292. Over arginine 293 to valine 309 the chain is Cytoplasmic.

It belongs to the G-protein coupled receptor 1 family.

It localises to the cell membrane. Its function is as follows. Odorant receptor. This is Olfactory receptor 5H2 (OR5H2) from Homo sapiens (Human).